Reading from the N-terminus, the 81-residue chain is Sulfur carrier protein TusA (81 aa).

Cysteine 19 (cysteine persulfide intermediate) is an active-site residue.

Belongs to the sulfur carrier protein TusA family.

The protein resides in the cytoplasm. Its function is as follows. Sulfur carrier protein which probably makes part of a sulfur-relay system. The sequence is that of Sulfur carrier protein TusA from Shewanella sediminis (strain HAW-EB3).